Here is a 167-residue protein sequence, read N- to C-terminus: Large ribosomal subunit protein uL5 (167 aa).

Belongs to the universal ribosomal protein uL5 family. Part of the 50S ribosomal subunit; contacts the 5S rRNA and probably tRNA. Forms a bridge to the 30S subunit in the 70S ribosome.

Functionally, this is one of the proteins that bind and probably mediate the attachment of the 5S RNA into the large ribosomal subunit, where it forms part of the central protuberance. In the 70S ribosome it contacts protein S13 of the 30S subunit (bridge B1b), connecting the 2 subunits; this bridge is implicated in subunit movement. May contact the P site tRNA; the 5S rRNA and some of its associated proteins might help stabilize positioning of ribosome-bound tRNAs. The protein is Large ribosomal subunit protein uL5 of Methanoculleus marisnigri (strain ATCC 35101 / DSM 1498 / JR1).